The chain runs to 297 residues: Cbb3-type cytochrome c oxidase subunit CcoP (297 aa).

Over 1 to 35 (MSKKPTTKKEVQTTGHSWDGIEELNTPLPRWWLWT) the chain is Cytoplasmic. Residues 36-56 (FYATIVWGVAYSIAMPAWPIF) form a helical membrane-spanning segment. The Periplasmic segment spans residues 57-297 (ASGATPGILG…SYVHSLGGGQ (241 aa)). 2 Cytochrome c domains span residues 108 to 199 (YTRN…LKIS) and 206 to 294 (ARAT…HSLG). Heme c contacts are provided by Cys121, Cys124, His125, Met174, Cys219, Cys222, His223, and Met264.

The protein belongs to the CcoP / FixP family. As to quaternary structure, component of the cbb3-type cytochrome c oxidase at least composed of CcoN, CcoO, CcoQ and CcoP. Interacts with CcoH (via transmembrane domain). Heme c serves as cofactor.

It is found in the cell inner membrane. It participates in energy metabolism; oxidative phosphorylation. In terms of biological role, C-type cytochrome. Part of the cbb3-type cytochrome c oxidase complex. CcoP subunit is required for transferring electrons from donor cytochrome c via its heme groups to CcoO subunit. From there, electrons are shuttled to the catalytic binuclear center of CcoN subunit where oxygen reduction takes place. The complex also functions as a proton pump. In Rhodobacter capsulatus (strain ATCC BAA-309 / NBRC 16581 / SB1003), this protein is Cbb3-type cytochrome c oxidase subunit CcoP.